The primary structure comprises 846 residues: Leucine--tRNA ligase (846 aa).

Positions 47 to 57 (PYPSGRIHMGH) match the 'HIGH' region motif. A 'KMSKS' region motif is present at residues 621–625 (KMSKS). Lys-624 is a binding site for ATP.

It belongs to the class-I aminoacyl-tRNA synthetase family.

The protein localises to the cytoplasm. It carries out the reaction tRNA(Leu) + L-leucine + ATP = L-leucyl-tRNA(Leu) + AMP + diphosphate. This is Leucine--tRNA ligase from Zymomonas mobilis subsp. mobilis (strain ATCC 31821 / ZM4 / CP4).